We begin with the raw amino-acid sequence, 100 residues long: MRLTPHEQERLLLSYAAEVARRRQARGLRLNHPEAVALITDHVLEGARDGRTVAELMASGCEVLGRDDVMEGVPEMIADVQVEATFPDGTKLVTVHHPIR.

It belongs to the urease gamma subunit family. Heterotrimer of UreA (gamma), UreB (beta) and UreC (alpha) subunits. Three heterotrimers associate to form the active enzyme.

It is found in the cytoplasm. The enzyme catalyses urea + 2 H2O + H(+) = hydrogencarbonate + 2 NH4(+). Its pathway is nitrogen metabolism; urea degradation; CO(2) and NH(3) from urea (urease route): step 1/1. The polypeptide is Urease subunit gamma (Mycobacterium ulcerans (strain Agy99)).